The primary structure comprises 280 residues: Band 7 protein AGAP004871 (280 aa).

A helical membrane pass occupies residues Ile23–Cys43.

Belongs to the band 7/mec-2 family.

It is found in the membrane. The protein is Band 7 protein AGAP004871 of Anopheles gambiae (African malaria mosquito).